A 443-amino-acid chain; its full sequence is Probable glycine dehydrogenase (decarboxylating) subunit 1 (443 aa).

It belongs to the GcvP family. N-terminal subunit subfamily. The glycine cleavage system is composed of four proteins: P, T, L and H. In this organism, the P 'protein' is a heterodimer of two subunits.

The catalysed reaction is N(6)-[(R)-lipoyl]-L-lysyl-[glycine-cleavage complex H protein] + glycine + H(+) = N(6)-[(R)-S(8)-aminomethyldihydrolipoyl]-L-lysyl-[glycine-cleavage complex H protein] + CO2. Its function is as follows. The glycine cleavage system catalyzes the degradation of glycine. The P protein binds the alpha-amino group of glycine through its pyridoxal phosphate cofactor; CO(2) is released and the remaining methylamine moiety is then transferred to the lipoamide cofactor of the H protein. The polypeptide is Probable glycine dehydrogenase (decarboxylating) subunit 1 (Chlorobium limicola (strain DSM 245 / NBRC 103803 / 6330)).